Consider the following 102-residue polypeptide: Large ribosomal subunit protein bL21 (102 aa).

The protein belongs to the bacterial ribosomal protein bL21 family. Part of the 50S ribosomal subunit. Contacts protein L20.

This protein binds to 23S rRNA in the presence of protein L20. This Campylobacter lari (strain RM2100 / D67 / ATCC BAA-1060) protein is Large ribosomal subunit protein bL21.